Reading from the N-terminus, the 320-residue chain is Uroplakin-3b (320 aa).

The first 29 residues, 1-29, serve as a signal peptide directing secretion; the sequence is MGLPWGQPHLGLQMLLLALNCLRPSLSLG. The Lumenal segment spans residues 30–240; sequence EWGSWMDASS…LHPLFSGRPP (211 aa). An N-linked (GlcNAc...) asparagine glycan is attached at Asn-133. A helical membrane pass occupies residues 241 to 266; sequence TLGLLGSLYHALLQPVVAGGGPGAAA. Topologically, residues 267–320 are cytoplasmic; the sequence is DRLLHGQALHDPPHPTQRGRHTAGGLQAWPGPPPQPQPLAWPLCMGLGEMGRWE. Residues 273–303 are disordered; sequence QALHDPPHPTQRGRHTAGGLQAWPGPPPQPQ.

The protein belongs to the uroplakin-3 family. In terms of assembly, heterodimer with uroplakin-1B (UPK1B).

The protein resides in the cell membrane. In terms of biological role, component of the asymmetric unit membrane (AUM); a highly specialized biomembrane elaborated by terminally differentiated urothelial cells. May play an important role in AUM-cytoskeleton interaction in terminally differentiated urothelial cells. It also contributes to the formation of urothelial glycocalyx which may play an important role in preventing bacterial adherence. The sequence is that of Uroplakin-3b (UPK3B) from Homo sapiens (Human).